The primary structure comprises 280 residues: Ribosomal RNA small subunit methyltransferase A (280 aa).

Asn-11, Leu-13, Gly-37, Glu-57, Asp-85, and Asn-106 together coordinate S-adenosyl-L-methionine.

It belongs to the class I-like SAM-binding methyltransferase superfamily. rRNA adenine N(6)-methyltransferase family. RsmA subfamily.

Its subcellular location is the cytoplasm. The enzyme catalyses adenosine(1518)/adenosine(1519) in 16S rRNA + 4 S-adenosyl-L-methionine = N(6)-dimethyladenosine(1518)/N(6)-dimethyladenosine(1519) in 16S rRNA + 4 S-adenosyl-L-homocysteine + 4 H(+). Functionally, specifically dimethylates two adjacent adenosines (A1518 and A1519) in the loop of a conserved hairpin near the 3'-end of 16S rRNA in the 30S particle. May play a critical role in biogenesis of 30S subunits. This is Ribosomal RNA small subunit methyltransferase A from Campylobacter concisus (strain 13826).